A 1429-amino-acid chain; its full sequence is Dicer-like protein 2 (1429 aa).

One can recognise a Helicase ATP-binding domain in the interval 21–200 (MFEASLKGNI…TIEMNLNSVC (180 aa)). Residue 34–41 (MGTGSGKT) coordinates ATP. The DEAH box motif lies at 141–144 (DEAH). The region spanning 335-501 (ALISFLMSTE…EDRRRTEELR (167 aa)) is the Helicase C-terminal domain. One can recognise a Dicer dsRNA-binding fold domain in the interval 528–622 (AMQHLVHFCD…LPLTKSREFT (95 aa)). 2 RNase III domains span residues 874 to 1014 (ATRL…IDGG) and 1056 to 1250 (QENL…VDSG). The Mg(2+) site is built by Glu-1095, Asp-1236, and Glu-1239.

This sequence belongs to the helicase family. Dicer subfamily. It depends on Mg(2+) as a cofactor. Mn(2+) serves as cofactor.

Its function is as follows. Dicer-like endonuclease involved in cleaving double-stranded RNA in the RNA interference (RNAi) pathway. Produces 21 to 25 bp dsRNAs (siRNAs) which target the selective destruction of homologous RNAs leading to sequence-specific suppression of gene expression, called post-transcriptional gene silencing (PTGS). Part of a broad host defense response against viral infection and transposons. The chain is Dicer-like protein 2 (dcl2) from Emericella nidulans (strain FGSC A4 / ATCC 38163 / CBS 112.46 / NRRL 194 / M139) (Aspergillus nidulans).